Consider the following 346-residue polypeptide: Annexin A1 (346 aa).

The residue at position 2 (A2) is an N-acetylalanine. A Phosphoserine; by TRPM7 modification is found at S5. Q19 participates in a covalent cross-link: Isoglutamyl lysine isopeptide (Gln-Lys) (interchain with K-?). Position 21 is a phosphotyrosine; by EGFR (Y21). Position 27 is a phosphoserine; by PKC (S27). Residues S34 and S37 each carry the phosphoserine modification. Residue T41 is modified to Phosphothreonine. Annexin repeat units lie at residues 42–113 (FNPS…ALLK), 114–185 (TPAQ…SLAK), 197–269 (DLAD…AIVK), and 273–344 (SKPA…ALCG). Position 58 is an N6-acetyllysine (K58). 11 residues coordinate Ca(2+): G59, V60, E62, K97, L100, E105, M127, G129, G131, T132, and E134. Phosphothreonine is present on T136. Ca(2+)-binding residues include D171, G210, and R213. K214 is covalently cross-linked (Glycyl lysine isopeptide (Lys-Gly) (interchain with G-Cter in SUMO1); alternate). K214 participates in a covalent cross-link: Glycyl lysine isopeptide (Lys-Gly) (interchain with G-Cter in SUMO2); alternate. G215 provides a ligand contact to Ca(2+). An N6-acetyllysine modification is found at K239. Ca(2+) is bound by residues D253, E255, and L256. Residue K257 forms a Glycyl lysine isopeptide (Lys-Gly) (interchain with G-Cter in SUMO1) linkage. E261, M286, G288, and G290 together coordinate Ca(2+). At K312 the chain carries N6-acetyllysine. C324 and C343 are disulfide-bonded. Ca(2+) is bound by residues L328, E330, and T331. A Glycyl lysine isopeptide (Lys-Gly) (interchain with G-Cter in SUMO1) cross-link involves residue K332. A Ca(2+)-binding site is contributed by E336.

This sequence belongs to the annexin family. Homodimer; non-covalently linked. Homodimer; linked by transglutamylation. Homodimers linked by transglutamylation are observed in placenta, but not in other tissues. Interacts with S100A11. Heterotetramer, formed by two molecules each of S100A11 and ANXA1. Interacts with DYSF. Interacts with EGFR. Phosphorylated by protein kinase C, EGFR and TRPM7. Phosphorylated in response to EGF treatment. Post-translationally, sumoylated. In terms of processing, proteolytically cleaved by cathepsin CTSG to release the active N-terminal peptide Ac2-26.

The protein localises to the nucleus. Its subcellular location is the cytoplasm. It is found in the cell projection. The protein resides in the cilium. It localises to the basolateral cell membrane. The protein localises to the lateral cell membrane. Its subcellular location is the cell membrane. It is found in the apical cell membrane. The protein resides in the membrane. It localises to the early endosome. The protein localises to the cytoplasmic vesicle membrane. Its subcellular location is the endosome membrane. It is found in the secreted. The protein resides in the extracellular space. It localises to the extracellular exosome. The protein localises to the cytoplasmic vesicle. Its subcellular location is the secretory vesicle lumen. It is found in the phagocytic cup. Functionally, plays important roles in the innate immune response as effector of glucocorticoid-mediated responses and regulator of the inflammatory process. Has anti-inflammatory activity. Plays a role in glucocorticoid-mediated down-regulation of the early phase of the inflammatory response. Contributes to the adaptive immune response by enhancing signaling cascades that are triggered by T-cell activation, regulates differentiation and proliferation of activated T-cells. Promotes the differentiation of T-cells into Th1 cells and negatively regulates differentiation into Th2 cells. Has no effect on unstimulated T-cells. Negatively regulates hormone exocytosis via activation of the formyl peptide receptors and reorganization of the actin cytoskeleton. Has high affinity for Ca(2+) and can bind up to eight Ca(2+) ions. Displays Ca(2+)-dependent binding to phospholipid membranes. Plays a role in the formation of phagocytic cups and phagosomes. Plays a role in phagocytosis by mediating the Ca(2+)-dependent interaction between phagosomes and the actin cytoskeleton. Functions at least in part by activating the formyl peptide receptors and downstream signaling cascades. Promotes chemotaxis of granulocytes and monocytes via activation of the formyl peptide receptors. Promotes rearrangement of the actin cytoskeleton, cell polarization and cell migration. Promotes resolution of inflammation and wound healing. Acts via neutrophil N-formyl peptide receptors to enhance the release of CXCL2. In Pan troglodytes (Chimpanzee), this protein is Annexin A1 (ANXA1).